We begin with the raw amino-acid sequence, 574 residues long: MEPNSQRTKVPAFLSDLGKATLRGIRKCPRCGTFNGTRGLSCKNKTCGTIFRYGARKQPSIEAVKIITGSDLQVYSVRQRDRGPDYRCFVELGVSETAIQTVDGTIITQLSSGRCYVPSCLKAATQGIVENQCQHIKLAVTCQAEATPLTLKSSVLNALQAAPETKQSLWQLATEPTGPLVQRVTKNIMVVKCKASQKHNLGYLHASFMQKISSRSLPERRFFCSCQTLRPHKSSVPKAEAAPKCIHFFACLCAFASDETLAQEFSDFLNFDASGLKEIIVPHLGCHAESSVSACESAASKPRKRKKDEVSGAQVNSSLMPQDAVNSNLRKSGLKRPVVTSSLKRHVCGQLLDEAQVTLSFQDWLASVTERIHQTMHYQFDGKPEPLVFHIPQSFFDALQQRISIGSAKKRLPNSTTAFVRKDALPLGTFSKYTWHITNILQVKQILDTPEMPLEITRSFIQNRDGTYELFKCPKVEVENIAESYGRIEKQPVLRPLELKTFLKVGNTSPDQKEPTPFIIEWIPDILPQSKIGELRIKFEYGHHRNGHVADYQDPRPPMDQPLELAPLTTITFP.

Residues 297–317 form a disordered region; that stretch reads SAASKPRKRKKDEVSGAQVNS.

This is an uncharacterized protein from Mus musculus (Mouse).